The primary structure comprises 436 residues: MGQVLPLVTRQGDRIAIVSGLRTPFARQATAFHGIPAVDLGKMVVGELLARSEIPAEVIEQLVFGQVVQMPEAPNIAREIVLGTGMNVHTDAYSVSRACATSFQAVANVAESLMAGTIRAGIAGGADSSSVLPIGVSKKLARVLVDVNKARTMSQRLKLFSRLRLRDLMPVPPAVAEYSTGLRMGDTAEQMAKTYGITREQQDALAHRSHQRAAQAWSDGKLKEEVMTAFIPPYKQPFVEDNNIRGNSSLADYAKLRPAFDRKHGTVTAANSTPLTDGAAAVILMTESRAKELGLVPLGYLRSYAFTAIDVWQDMLLGPAWSTPLALERAGLTMSDLTLIDMHEAFAAQTLANIQLLGSERFAREVLGRAHATGEVDDSKFNVLGGSIAYGHPFAATGARMITQTLHELRRRGGGFGLVTACAAGGLGAAMVLEAE.

Catalysis depends on C99, which acts as the Acyl-thioester intermediate. Active-site proton acceptor residues include H392 and C422.

This sequence belongs to the thiolase-like superfamily. Thiolase family. Heterotetramer of two alpha chains (FadJ) and two beta chains (FadI).

The protein localises to the cytoplasm. It catalyses the reaction an acyl-CoA + acetyl-CoA = a 3-oxoacyl-CoA + CoA. The protein operates within lipid metabolism; fatty acid beta-oxidation. In terms of biological role, catalyzes the final step of fatty acid oxidation in which acetyl-CoA is released and the CoA ester of a fatty acid two carbons shorter is formed. The polypeptide is 3-ketoacyl-CoA thiolase (Escherichia coli (strain ATCC 8739 / DSM 1576 / NBRC 3972 / NCIMB 8545 / WDCM 00012 / Crooks)).